Here is a 356-residue protein sequence, read N- to C-terminus: MDERRTPSPCSSRPSSPRTPPCEMFGPVGIEAVLDQLRIKAMKTGFEFNIMVVGQSGLGKSTMVNTLFKSKVWQSPAPNLDVPMPQTLELHSVTHVIEEKGLKLKLTVTDTPGFGDQINNDKCWDPILSYINQQYEQYLQEELLITRQRHIPDTRVHCCVYFVPPTGHCLRPLDIEFLRRLCRTVNVVPVIARADSLTIEERDAFRSRIQQNLKNHCIDVYPQQCFDEDINDRLLNSKIREQIPFAVVGADREHIVNGRCVLGRKTKWGIIEVENMAHCEFLLLRDLLIRSHLQDLKDITHNVHYENYRVLRLNESHVLPRGPGWVNLAPASPGQLMAPGPEKVRKRSKDPRDDEC.

The interval 1 to 23 (MDERRTPSPCSSRPSSPRTPPCE) is disordered. The span at 7–16 (PSPCSSRPSS) shows a compositional bias: low complexity. Positions 44 to 315 (TGFEFNIMVV…ENYRVLRLNE (272 aa)) constitute a Septin-type G domain. Residues 44 to 317 (TGFEFNIMVV…YRVLRLNESH (274 aa)) form an interaction with SEPTIN7 region. Residues 54 to 61 (GQSGLGKS) form a G1 motif region. GTP contacts are provided by residues 54 to 61 (GQSGLGKS), T87, G113, 193 to 201 (RADSLTIEE), G249, and R264. A G3 motif region spans residues 110–113 (DTPG). Positions 192-195 (ARAD) are G4 motif. The interval 256 to 356 (VNGRCVLGRK…RSKDPRDDEC (101 aa)) is self-association (via N-terminus) to polymerize octameric septin 12-7-6-2/4-2/4-6-7-12 filaments. The segment at 330–356 (PASPGQLMAPGPEKVRKRSKDPRDDEC) is disordered.

The protein belongs to the TRAFAC class TrmE-Era-EngA-EngB-Septin-like GTPase superfamily. Septin GTPase family. Septins polymerize into heterooligomeric protein complexes that form filaments, and can associate with cellular membranes, actin filaments and microtubules. GTPase activity is required for filament formation. Interacts with SEPTIN6 and SEPTIN11. Self-associates. Component of a octameric complex consisting of SEPTIN12, SEPTIN7, SEPTIN6 and SEPTIN2 or SEPTIN4 in the order 12-7-6-2-2-6-7-12 or 12-7-6-4-4-6-7-12 and located in the sperm annulus; the octamer polymerizes into filaments via the SEPTIN12 N- and C-termini; the SEPTIN12:SEPTIN7 association is mediated by the GTP-binding domains. Interacts with SPAG4 and LMNB1. Associates with alpha- and beta-tubulins. As to expression, predominantly expressed in testis and epididymis. Component of the sperm tail annulus (at protein level).

It localises to the cytoplasm. Its subcellular location is the cytoskeleton. The protein localises to the spindle. It is found in the cell projection. The protein resides in the cilium. It localises to the flagellum. In terms of biological role, filament-forming cytoskeletal GTPase. May play a role in cytokinesis (Potential). Involved in spermatogenesis. Involved in the morphogenesis of sperm heads and the elongation of sperm tails probably implicating the association with alpha- and beta-tubulins. Forms a filamentous structure with SEPTIN7, SEPTIN6, SEPTIN2 and probably SEPTIN4 at the sperm annulus which is required for the structural integrity and motility of the sperm tail during postmeiotic differentiation. The polypeptide is Septin-12 (Rattus norvegicus (Rat)).